A 351-amino-acid chain; its full sequence is Transmembrane protein 115 (351 aa).

Residues 1-19 lie on the Cytoplasmic side of the membrane; sequence MQRALPGARQHLGAILASA. A mediates homooligomerization region spans residues 1-205; it reads MQRALPGARQ…FGLLSSWVYL (205 aa). A helical transmembrane segment spans residues 20–40; it reads SVVVKALCAAVLFLYLLSFAV. Over 41–97 the chain is Lumenal; that stretch reads DTGCLAVTPGYLFPPNFWIWTLATHGLMEQHVWDVAISLTTVVVAGRLLEPLWGALE. Residues 98 to 118 traverse the membrane as a helical segment; it reads LLIFFSVVNVSVGLLGAFAYL. The Cytoplasmic portion of the chain corresponds to 119–126; it reads LTYMASFN. Residues 127-147 traverse the membrane as a helical segment; it reads LVYLFTVRIHGALGFLGGVLV. The Lumenal segment spans residues 148-165; that stretch reads ALKQTMGDCVVLRVPQVR. The helical transmembrane segment at 166 to 186 threads the bilayer; that stretch reads VSVMPMLLLALLLLLRLATLL. Residues 187-351 are Cytoplasmic-facing; the sequence is QSPALASYGF…ITFEAAPPTL (165 aa). The interval 206 to 229 is mediates localization to the Golgi; it reads RFYQRHSRGRGDMADHFAFATFFP. The tract at residues 301–351 is disordered; the sequence is QSIWPSMDDDEEESGAKVDSPLPSDKAPTPPGKGAAPESSLITFEAAPPTL. Phosphothreonine is present on T329.

The protein belongs to the TMEM115 family. In terms of assembly, homooligomer. Interacts with COPB1. May interact with LMAN1. Interacts with the COG complex; probably through COG3. Expressed strongly in kidney and skeletal muscle, followed by liver, placenta, pancreas, and lung, with low amounts in heart and only traces in brain. Widely expressed with ubiquitous expression in epithelial tissues (at protein level).

It localises to the golgi apparatus. The protein localises to the golgi stack membrane. May play a role in retrograde transport of proteins from the Golgi to the endoplasmic reticulum. May indirectly play a role in protein glycosylation in the Golgi. This is Transmembrane protein 115 from Homo sapiens (Human).